The sequence spans 199 residues: Holliday junction branch migration complex subunit RuvA (199 aa).

Residues 1–64 (MIAFLKGAVF…ENEFKLFGFL (64 aa)) form a domain I region. Positions 65-143 (DQDELRLFKT…ELKLVEVEKE (79 aa)) are domain II. The flexible linker stretch occupies residues 144 to 148 (QRPLL). A domain III region spans residues 148 to 199 (LDELMEALEILGYSRSEVLPAIMDLNRNKQLGNIVEENIKLVLKAKAQEMRR).

This sequence belongs to the RuvA family. As to quaternary structure, homotetramer. Forms an RuvA(8)-RuvB(12)-Holliday junction (HJ) complex. HJ DNA is sandwiched between 2 RuvA tetramers; dsDNA enters through RuvA and exits via RuvB. An RuvB hexamer assembles on each DNA strand where it exits the tetramer. Each RuvB hexamer is contacted by two RuvA subunits (via domain III) on 2 adjacent RuvB subunits; this complex drives branch migration. In the full resolvosome a probable DNA-RuvA(4)-RuvB(12)-RuvC(2) complex forms which resolves the HJ.

The protein resides in the cytoplasm. The RuvA-RuvB-RuvC complex processes Holliday junction (HJ) DNA during genetic recombination and DNA repair, while the RuvA-RuvB complex plays an important role in the rescue of blocked DNA replication forks via replication fork reversal (RFR). RuvA specifically binds to HJ cruciform DNA, conferring on it an open structure. The RuvB hexamer acts as an ATP-dependent pump, pulling dsDNA into and through the RuvAB complex. HJ branch migration allows RuvC to scan DNA until it finds its consensus sequence, where it cleaves and resolves the cruciform DNA. This is Holliday junction branch migration complex subunit RuvA from Syntrophomonas wolfei subsp. wolfei (strain DSM 2245B / Goettingen).